The following is a 163-amino-acid chain: Neurotrophin-3 (163 aa).

The signal sequence occupies residues 1 to 3 (IQS). Positions 4–119 (TSMDQGILTE…ALNRTSRRKR (116 aa)) are excised as a propeptide. Disordered regions lie at residues 38 to 60 (ARTK…ATAS) and 90 to 131 (LLSE…YSVC). An N-linked (GlcNAc...) asparagine glycan is attached at N112.

It belongs to the NGF-beta family.

Its subcellular location is the secreted. In terms of biological role, seems to promote the survival of visceral and proprioceptive sensory neurons. This chain is Neurotrophin-3 (NTF3), found in Eunectes notaeus (Yellow anaconda).